We begin with the raw amino-acid sequence, 351 residues long: D-alanine--D-alanine ligase (351 aa).

One can recognise an ATP-grasp domain in the interval 135-344; it reads KMAFAQAGLP…FAELVDQLIQ (210 aa). 171–226 provides a ligand contact to ATP; the sequence is EQRLGYPCFVKPANLGSSVGIAKVRSRSELEKALDSAASYDRRIVIETGVKAREVE. D297, E311, and N313 together coordinate Mg(2+).

It belongs to the D-alanine--D-alanine ligase family. Requires Mg(2+) as cofactor. The cofactor is Mn(2+).

Its subcellular location is the cytoplasm. The enzyme catalyses 2 D-alanine + ATP = D-alanyl-D-alanine + ADP + phosphate + H(+). It participates in cell wall biogenesis; peptidoglycan biosynthesis. In terms of biological role, cell wall formation. The chain is D-alanine--D-alanine ligase from Rippkaea orientalis (strain PCC 8801 / RF-1) (Cyanothece sp. (strain PCC 8801)).